A 131-amino-acid chain; its full sequence is Spermatocyte protein spe-27 (131 aa).

The signal sequence occupies residues 1–17 (MNKSLIFLLSFAYSCYS).

In terms of biological role, required for spermiogenesis. The protein is Spermatocyte protein spe-27 (spe-27) of Caenorhabditis elegans.